Here is a 713-residue protein sequence, read N- to C-terminus: Segment polarity protein dishevelled homolog DVL-3 (713 aa).

The 82-residue stretch at 1 to 82 (MGETKVIYHL…RVVCWLVSAD (82 aa)) folds into the DIX domain. Composition is skewed to polar residues over residues 87 to 98 (DAGSVCADNQSD) and 118 to 127 (HPNTRGSQEN). The interval 87-235 (DAGSVCADNQ…PRIERSSSFS (149 aa)) is disordered. Basic and acidic residues predominate over residues 140-155 (AHRERPRRKETPEHAT). A compositionally biased stretch (low complexity) spans 173 to 189 (ESSSTLMSSELDSTSFF). A compositionally biased stretch (polar residues) spans 199-210 (RFSNSTEQSSAS). Positions 212-225 (LMRRHKRRRRKPKA) are enriched in basic residues. The PDZ domain maps to 248–333 (TVTLNMEKYN…KPGPITLTVA (86 aa)). The region spanning 421–495 (PESGLEVRDR…SEQCYYIFGD (75 aa)) is the DEP domain. Residues 508-518 (HDGSSGTSDQD) are compositionally biased toward polar residues. Disordered regions lie at residues 508 to 527 (HDGS…PHPG) and 545 to 652 (YSPH…GPPG). Over residues 564-579 (GSQHSEGSRSSGSNRS) the composition is skewed to low complexity. Composition is skewed to basic and acidic residues over residues 580–593 (STEK…KGGD) and 602–618 (ESDH…RAAS). The span at 629–646 (HRSHHSIAHSIRSHHTHH) shows a compositional bias: basic residues.

This sequence belongs to the DSH family.

It is found in the cytoplasm. Its function is as follows. Involved in the signal transduction pathway mediated by multiple Wnt genes. Required during ciliogenesis for the docking of basal bodies to the apical plasma membrane. This chain is Segment polarity protein dishevelled homolog DVL-3, found in Xenopus tropicalis (Western clawed frog).